The following is a 213-amino-acid chain: Probable nicotinate-nucleotide adenylyltransferase (213 aa).

Belongs to the NadD family.

It carries out the reaction nicotinate beta-D-ribonucleotide + ATP + H(+) = deamido-NAD(+) + diphosphate. It participates in cofactor biosynthesis; NAD(+) biosynthesis; deamido-NAD(+) from nicotinate D-ribonucleotide: step 1/1. Functionally, catalyzes the reversible adenylation of nicotinate mononucleotide (NaMN) to nicotinic acid adenine dinucleotide (NaAD). The sequence is that of Probable nicotinate-nucleotide adenylyltransferase from Salmonella gallinarum (strain 287/91 / NCTC 13346).